The sequence spans 1025 residues: Dihydropyrimidine dehydrogenase [NADP(+)] (1025 aa).

Residues 69–100 (ERGALREAMRCLKCADAPCQKSCPTNLDIKSF) enclose the 4Fe-4S ferredoxin-type 1 domain. Cys79, Cys82, Cys87, and Cys91 together coordinate [4Fe-4S] cluster. Val129 provides a ligand contact to FAD. [4Fe-4S] cluster contacts are provided by Cys130, Cys136, Cys140, and Gln156. Residues 194–198 (GAGPA), 218–226 (EKQEYVGGI), Arg235, and Leu261 each bind FAD. Residues 340 to 343 (AGDT), 364 to 365 (RK), and Arg371 each bind NADP(+). Lys384 is modified (N6-acetyllysine). NADP(+)-binding positions include 437 to 439 (AFG) and 481 to 487 (DVVGIAN). FAD is bound at residue 480–489 (GDVVGIANTT). Residues Ser550 and 574-575 (KT) contribute to the FMN site. Substrate contacts are provided by residues Asn609 and 668 to 670 (NLS). The active-site Proton acceptor is Cys671. FMN is bound at residue Lys709. 736–737 (NT) lines the substrate pocket. FMN is bound by residues Gly767, 793-795 (TGG), and 816-817 (CS). 4Fe-4S ferredoxin-type domains follow at residues 944-976 (VVAV…FDPE) and 978-1007 (HLPT…MVSR). Positions 953, 956, 959, 963, 986, 989, 992, and 996 each coordinate [4Fe-4S] cluster.

Belongs to the dihydropyrimidine dehydrogenase family. As to quaternary structure, homodimer. FAD is required as a cofactor. FMN serves as cofactor. The cofactor is [4Fe-4S] cluster.

The protein localises to the cytoplasm. It catalyses the reaction 5,6-dihydrouracil + NADP(+) = uracil + NADPH + H(+). It carries out the reaction 5,6-dihydrothymine + NADP(+) = thymine + NADPH + H(+). It functions in the pathway amino-acid biosynthesis; beta-alanine biosynthesis. Inactivated by 5-iodouracil. Its function is as follows. Involved in pyrimidine base degradation. Catalyzes the reduction of uracil and thymine. Also involved the degradation of the chemotherapeutic drug 5-fluorouracil. In Bos taurus (Bovine), this protein is Dihydropyrimidine dehydrogenase [NADP(+)] (DPYD).